Consider the following 248-residue polypeptide: Methionine aminopeptidase 1 (248 aa).

Substrate is bound at residue H77. Residues D94, D105, and H168 each contribute to the a divalent metal cation site. A substrate-binding site is contributed by H175. Residues E201 and E232 each coordinate a divalent metal cation.

Monomer. Co(2+) serves as cofactor. The cofactor is Zn(2+). It depends on Mn(2+) as a cofactor. Fe(2+) is required as a cofactor.

The protein resides in the cytoplasm. The catalysed reaction is Release of N-terminal amino acids, preferentially methionine, from peptides and arylamides.. Its function is as follows. Removes the N-terminal methionine from nascent proteins. The N-terminal methionine is often cleaved when the second residue in the primary sequence is small and uncharged (Met-Ala-, Cys, Gly, Pro, Ser, Thr, or Val). Requires deformylation of the N(alpha)-formylated initiator methionine before it can be hydrolyzed. The protein is Methionine aminopeptidase 1 of Bacillus subtilis (strain 168).